A 151-amino-acid chain; its full sequence is Protein Smg homolog (151 aa).

This sequence belongs to the Smg family.

This Laribacter hongkongensis (strain HLHK9) protein is Protein Smg homolog.